Consider the following 124-residue polypeptide: Late histone H2B.2.2 (124 aa).

The tract at residues Met-1–Arg-32 is disordered. The span at Gly-10–Gly-19 shows a compositional bias: basic residues. Ser-111 is a glycosylation site (O-linked (GlcNAc) serine). Lys-119 is covalently cross-linked (Glycyl lysine isopeptide (Lys-Gly) (interchain with G-Cter in ubiquitin)).

This sequence belongs to the histone H2B family. The nucleosome is a histone octamer containing two molecules each of H2A, H2B, H3 and H4 assembled in one H3-H4 heterotetramer and two H2A-H2B heterodimers. The octamer wraps approximately 147 bp of DNA. In terms of processing, monoubiquitination of Lys-119 gives a specific tag for epigenetic transcriptional activation and is also prerequisite for histone H3 'Lys-4' and 'Lys-79' methylation. Post-translationally, glcNAcylation at Ser-111 promotes monoubiquitination of Lys-119. It fluctuates in response to extracellular glucose, and associates with transcribed genes.

The protein localises to the nucleus. It is found in the chromosome. In terms of biological role, core component of nucleosome. Nucleosomes wrap and compact DNA into chromatin, limiting DNA accessibility to the cellular machineries which require DNA as a template. Histones thereby play a central role in transcription regulation, DNA repair, DNA replication and chromosomal stability. DNA accessibility is regulated via a complex set of post-translational modifications of histones, also called histone code, and nucleosome remodeling. The sequence is that of Late histone H2B.2.2 from Psammechinus miliaris (Green sea urchin).